Here is a 364-residue protein sequence, read N- to C-terminus: DNA primase large subunit PriL (364 aa).

Positions 237, 309, 318, and 325 each coordinate [4Fe-4S] cluster. The interval Met-345 to Gln-364 is disordered.

Belongs to the eukaryotic-type primase large subunit family. In terms of assembly, heterodimer of a small subunit (PriS) and a large subunit (PriL). The cofactor is [4Fe-4S] cluster.

Regulatory subunit of DNA primase, an RNA polymerase that catalyzes the synthesis of short RNA molecules used as primers for DNA polymerase during DNA replication. Stabilizes and modulates the activity of the small subunit, increasing the rate of DNA synthesis, and conferring RNA synthesis capability. The DNA polymerase activity may enable DNA primase to also catalyze primer extension after primer synthesis. May also play a role in DNA repair. The protein is DNA primase large subunit PriL of Methanococcoides burtonii (strain DSM 6242 / NBRC 107633 / OCM 468 / ACE-M).